A 453-amino-acid polypeptide reads, in one-letter code: Armadillo repeat-containing X-linked protein 1 (453 aa).

Residues 1–6 are Mitochondrial intermembrane-facing; it reads MGRTRE. 2 mitochondrion outer membrane (MOM)-targeting sequence regions span residues 1-6 and 26-36; these read MGRTRE and RLAWGRDENEK. The helical; Signal-anchor transmembrane segment at 7–29 threads the bilayer; that stretch reads AGCVAAGVVIGAGACYCVYRLAW. Residues 30 to 453 lie on the Cytoplasmic side of the membrane; it reads GRDENEKIWD…VKVLKVLTKL (424 aa). A disordered region spans residues 140 to 182; that stretch reads PSLPCPGGRGGGCHPTRSGSRAGGRASGKSKGKARSKSTRAPA. The segment covering 167 to 177 has biased composition (basic residues); the sequence is GKSKGKARSKS. ARM repeat units lie at residues 195–235, 237–276, 358–398, and 415–453; these read PYKI…NNAA, SFNQ…NLSV, PAMT…NIND, and SSLF…LTKL.

This sequence belongs to the eutherian X-chromosome-specific Armcx family. In terms of assembly, interacts with MIRO1.

It localises to the mitochondrion. It is found in the mitochondrion outer membrane. Its function is as follows. Regulates mitochondrial transport during axon regeneration. Increases the proportion of motile mitochondria by recruiting stationary mitochondria into the motile pool. Enhances mitochondria movement and neurite growth in both adult axons and embryonic neurons. Promotes neuronal survival and axon regeneration after nerve injury. May link mitochondria to the Trak1-kinesin motor complex via its interaction with MIRO1. The polypeptide is Armadillo repeat-containing X-linked protein 1 (ARMCX1) (Pongo abelii (Sumatran orangutan)).